The following is an 84-amino-acid chain: Small ribosomal subunit protein uS17 (84 aa).

This sequence belongs to the universal ribosomal protein uS17 family. As to quaternary structure, part of the 30S ribosomal subunit.

One of the primary rRNA binding proteins, it binds specifically to the 5'-end of 16S ribosomal RNA. The protein is Small ribosomal subunit protein uS17 of Clostridium botulinum (strain 657 / Type Ba4).